Reading from the N-terminus, the 158-residue chain is Transcription elongation factor GreA (158 aa).

This sequence belongs to the GreA/GreB family.

Its function is as follows. Necessary for efficient RNA polymerase transcription elongation past template-encoded arresting sites. The arresting sites in DNA have the property of trapping a certain fraction of elongating RNA polymerases that pass through, resulting in locked ternary complexes. Cleavage of the nascent transcript by cleavage factors such as GreA or GreB allows the resumption of elongation from the new 3'terminus. GreA releases sequences of 2 to 3 nucleotides. The chain is Transcription elongation factor GreA from Rhizobium johnstonii (strain DSM 114642 / LMG 32736 / 3841) (Rhizobium leguminosarum bv. viciae).